The following is a 226-amino-acid chain: Histone H1.5 (226 aa).

Positions 1–16 (MSETAPAETATPAPVE) are enriched in low complexity. Residues 1–44 (MSETAPAETATPAPVEKSPAKKKATKKAAGAGAAKRKATGPPVS) form a disordered region. At S2 the chain carries N-acetylserine; partial. S2 is subject to Phosphoserine. The residue at position 11 (T11) is a Phosphothreonine; by GSK3. Position 17 is an N6-acetyllysine (K17). At S18 the chain carries Phosphoserine. K27 carries the post-translational modification N6-methyllysine. K37 carries the N6-(beta-hydroxybutyryl)lysine; alternate modification. At K37 the chain carries N6-succinyllysine; alternate. T39 is modified (phosphothreonine). The H15 domain occupies 39–112 (TGPPVSELIT…GASGSFKLNK (74 aa)). K49 carries the post-translational modification N6-acetyllysine. N6-(beta-hydroxybutyryl)lysine is present on K55. R57 is subject to Citrulline. An N6-(beta-hydroxybutyryl)lysine modification is found at K67. Residue K78 is modified to N6-acetyllysine. K88, K93, and K109 each carry N6-(beta-hydroxybutyryl)lysine. Positions 98 to 226 (QTKGTGASGS…KAKKAAAKKK (129 aa)) are disordered. Residues 122–133 (KAKKAGAAKAKK) are compositionally biased toward basic residues. Phosphothreonine is present on residues T138 and T155. Residues 140–161 (KKAKKAAGAKKAVKKTPKKAKK) show a composition bias toward basic residues. An N6-acetyllysine modification is found at K168. A compositionally biased stretch (basic residues) spans 169 to 187 (KVAKSPKKAKAAAKPKKAT). Phosphoserine occurs at positions 173 and 189. Basic residues predominate over residues 194-226 (KAVKPKAAKPKAAKPKAAKPKAAKAKKAAAKKK).

The protein belongs to the histone H1/H5 family. Interacts with MSX1. In terms of processing, H1 histones are progressively phosphorylated during the cell cycle, becoming maximally phosphorylated during late G2 phase and M phase, and being dephosphorylated sharply thereafter. Phosphorylated at Thr-11 by GSK3B during mitosis in prometaphase and dephosphorylated in telophase. Citrullination at Arg-57 (H1R54ci) by PADI4 takes place within the DNA-binding site of H1 and results in its displacement from chromatin and global chromatin decondensation, thereby promoting pluripotency and stem cell maintenance. As to expression, ubiquitous. Expressed in the majority of the cell lines tested and in testis.

The protein resides in the nucleus. Its subcellular location is the chromosome. Functionally, histone H1 protein binds to linker DNA between nucleosomes forming the macromolecular structure known as the chromatin fiber. Histones H1 are necessary for the condensation of nucleosome chains into higher-order structured fibers. Also acts as a regulator of individual gene transcription through chromatin remodeling, nucleosome spacing and DNA methylation. The sequence is that of Histone H1.5 from Homo sapiens (Human).